A 227-amino-acid polypeptide reads, in one-letter code: Cytochrome c oxidase subunit 2 (227 aa).

At 1–14 (MAYPFQLGLQDATS) the chain is on the mitochondrial intermembrane side. The chain crosses the membrane as a helical span at residues 15 to 45 (PIMEELTNFHDHTLMIVFLISSLVLYIISLM). The Mitochondrial matrix portion of the chain corresponds to 46-59 (LTTKLTHTSTMDAQ). The helical transmembrane segment at 60 to 87 (EVETIWTILPAVILILIALPSLRILYMM) threads the bilayer. Residues 88–227 (DEINNPVLTV…HFENWSTSMI (140 aa)) lie on the Mitochondrial intermembrane side of the membrane. Cu cation-binding residues include histidine 161, cysteine 196, glutamate 198, cysteine 200, histidine 204, and methionine 207. Glutamate 198 contributes to the Mg(2+) binding site.

This sequence belongs to the cytochrome c oxidase subunit 2 family. Component of the cytochrome c oxidase (complex IV, CIV), a multisubunit enzyme composed of 14 subunits. The complex is composed of a catalytic core of 3 subunits MT-CO1, MT-CO2 and MT-CO3, encoded in the mitochondrial DNA, and 11 supernumerary subunits COX4I, COX5A, COX5B, COX6A, COX6B, COX6C, COX7A, COX7B, COX7C, COX8 and NDUFA4, which are encoded in the nuclear genome. The complex exists as a monomer or a dimer and forms supercomplexes (SCs) in the inner mitochondrial membrane with NADH-ubiquinone oxidoreductase (complex I, CI) and ubiquinol-cytochrome c oxidoreductase (cytochrome b-c1 complex, complex III, CIII), resulting in different assemblies (supercomplex SCI(1)III(2)IV(1) and megacomplex MCI(2)III(2)IV(2)). Found in a complex with TMEM177, COA6, COX18, COX20, SCO1 and SCO2. Interacts with TMEM177 in a COX20-dependent manner. Interacts with COX20. Interacts with COX16. It depends on Cu cation as a cofactor.

The protein localises to the mitochondrion inner membrane. It carries out the reaction 4 Fe(II)-[cytochrome c] + O2 + 8 H(+)(in) = 4 Fe(III)-[cytochrome c] + 2 H2O + 4 H(+)(out). Functionally, component of the cytochrome c oxidase, the last enzyme in the mitochondrial electron transport chain which drives oxidative phosphorylation. The respiratory chain contains 3 multisubunit complexes succinate dehydrogenase (complex II, CII), ubiquinol-cytochrome c oxidoreductase (cytochrome b-c1 complex, complex III, CIII) and cytochrome c oxidase (complex IV, CIV), that cooperate to transfer electrons derived from NADH and succinate to molecular oxygen, creating an electrochemical gradient over the inner membrane that drives transmembrane transport and the ATP synthase. Cytochrome c oxidase is the component of the respiratory chain that catalyzes the reduction of oxygen to water. Electrons originating from reduced cytochrome c in the intermembrane space (IMS) are transferred via the dinuclear copper A center (CU(A)) of subunit 2 and heme A of subunit 1 to the active site in subunit 1, a binuclear center (BNC) formed by heme A3 and copper B (CU(B)). The BNC reduces molecular oxygen to 2 water molecules using 4 electrons from cytochrome c in the IMS and 4 protons from the mitochondrial matrix. The protein is Cytochrome c oxidase subunit 2 (MT-CO2) of Praomys taitae (Taita hill rat).